A 491-amino-acid chain; its full sequence is Probable cytosol aminopeptidase (491 aa).

Residues lysine 260 and aspartate 265 each contribute to the Mn(2+) site. Lysine 272 is a catalytic residue. Aspartate 284, aspartate 343, and glutamate 345 together coordinate Mn(2+). Residue arginine 347 is part of the active site.

Belongs to the peptidase M17 family. The cofactor is Mn(2+).

The protein localises to the cytoplasm. It catalyses the reaction Release of an N-terminal amino acid, Xaa-|-Yaa-, in which Xaa is preferably Leu, but may be other amino acids including Pro although not Arg or Lys, and Yaa may be Pro. Amino acid amides and methyl esters are also readily hydrolyzed, but rates on arylamides are exceedingly low.. The catalysed reaction is Release of an N-terminal amino acid, preferentially leucine, but not glutamic or aspartic acids.. Presumably involved in the processing and regular turnover of intracellular proteins. Catalyzes the removal of unsubstituted N-terminal amino acids from various peptides. The protein is Probable cytosol aminopeptidase of Trichormus variabilis (strain ATCC 29413 / PCC 7937) (Anabaena variabilis).